The primary structure comprises 755 residues: Primary amine oxidase (755 aa).

Residues 1 to 30 form the signal peptide; the sequence is MANGLKFSPRKTALALAVAVVCAWQSPVFA. Substrate-binding positions include 411–422 and 493–498; these read YLDSGDYGMGTL and VGNYDY. The Proton acceptor role is filled by aspartate 413. The Schiff-base intermediate with substrate; via topaquinone role is filled by tyrosine 496. Residue tyrosine 496 is modified to 2',4',5'-topaquinone. Cu cation-binding residues include histidine 554 and histidine 556. Residues aspartate 563, leucine 564, aspartate 565, glutamate 603, tyrosine 697, aspartate 700, glutamate 702, and aspartate 708 each coordinate Ca(2+). Aspartate 563 is a binding site for Mn(2+). Residue aspartate 565 participates in Mn(2+) binding. Aspartate 708 is a binding site for Mn(2+). Position 719 (histidine 719) interacts with Cu cation.

This sequence belongs to the copper/topaquinone oxidase family. As to quaternary structure, homodimer. Cu cation is required as a cofactor. Requires Zn(2+) as cofactor. Ca(2+) serves as cofactor. The cofactor is L-topaquinone. It depends on Mn(2+) as a cofactor. Post-translationally, topaquinone (TPQ) is generated by copper-dependent autoxidation of a specific tyrosyl residue.

It localises to the periplasm. It carries out the reaction a primary methyl amine + O2 + H2O = an aldehyde + H2O2 + NH4(+). Its function is as follows. Active on tyramine, tryptamine, beta-phenethylamine and dopamine. The protein is Primary amine oxidase (maoA) of Klebsiella aerogenes (Enterobacter aerogenes).